The sequence spans 617 residues: Sodium-dependent noradrenaline transporter (617 aa).

Positions 1-23 (MLLARMNPQVQPENNGADTGPEQ) are disordered. Topologically, residues 1 to 62 (MLLARMNPQV…AQPRETWGKK (62 aa)) are cytoplasmic. Residues 8 to 17 (PQVQPENNGA) show a composition bias toward polar residues. Residues 63-88 (IDFLLSVVGFAVDLANVWRFPYLCYK) form a helical membrane-spanning segment. Positions 71, 73, and 74 each coordinate Na(+). Asp75 contributes to the (R)-noradrenaline binding site. Position 75 (Asp75) interacts with dopamine. Asn78 is a binding site for Na(+). Residues Tyr87 and Lys88 each coordinate (R)-noradrenaline. Topologically, residues 89-92 (NGGG) are extracellular. The chain crosses the membrane as a helical span at residues 93 to 116 (AFLIPYTLFLIIAGMPLFYMELAL). Topologically, residues 117-135 (GQYNREGAATVWKICPFFK) are cytoplasmic. Residues 136 to 166 (GVGYAVILIALYVGFYYNVIIAWSLYYLFSS) traverse the membrane as a helical segment. Ala145 and Gly149 together coordinate (R)-noradrenaline. Ala145 is a binding site for dopamine. The Extracellular portion of the chain corresponds to 167–233 (FTLNLPWTDC…SSGIHDIGLP (67 aa)). An intrachain disulfide couples Cys176 to Cys185. 3 N-linked (GlcNAc...) asparagine glycosylation sites follow: Asn184, Asn192, and Asn198. The helical transmembrane segment at 234–254 (QWQLLLCLMVVVIVLYFSLWK) threads the bilayer. Topologically, residues 255–257 (GVK) are cytoplasmic. Residues 258 to 282 (TSGKVVWITATLPYFVLFVLLVHGV) form a helical membrane-spanning segment. The Extracellular portion of the chain corresponds to 283–306 (TLPGASNGINAYLHIDFYRLKEAT). Residues 307-332 (VWIDAATQIFFSLGAGFGVLIAFASY) form a helical membrane-spanning segment. Phe317 is a binding site for (R)-noradrenaline. Dopamine is bound at residue Phe317. Residue Ser318 participates in Na(+) binding. The Cytoplasmic portion of the chain corresponds to 333–338 (NKFDNN). The chain crosses the membrane as a helical span at residues 339-362 (CYRDALLTSSINCITSFVSGFAIF). Asn350 contacts Na(+). The Extracellular portion of the chain corresponds to 363 to 402 (SILGYMAHEHKVNIEDVATEGAGLVFILYPEAISTLSGST). Residue Glu382 coordinates (R)-noradrenaline. Glu382 lines the dopamine pocket. Residues 403-428 (FWAVVFFVMLLALGLDSSMGGMEAVI) traverse the membrane as a helical segment. Residues Asp418 and Ser419 each coordinate Na(+). The Cytoplasmic portion of the chain corresponds to 429–443 (TGLADDFQVLKRHRK). A helical membrane pass occupies residues 444–464 (LFTFGVTFSTFLLALFCITKG). Gly465 is a topological domain (extracellular). The helical transmembrane segment at 466–492 (IYVLTLLDTFAAGTSILFAVLMEAIGV) threads the bilayer. Residues 493–522 (SWFYGVDRFSNDIQQMMGFRPGLYWRLCWK) are Cytoplasmic-facing. Residues 523 to 545 (FVSPAFLLFVVVVSIINFKPLTY) traverse the membrane as a helical segment. Residues 546–548 (DDY) are Extracellular-facing. A helical transmembrane segment spans residues 549-569 (IFPPWANWVGWGIALSSMVLV). Residues 570–617 (PIYVIYKFLSTQGSLWERLAYGITPENEHHLVAQRDIRQFQLQHWLAI) are Cytoplasmic-facing.

It belongs to the sodium:neurotransmitter symporter (SNF) (TC 2.A.22) family. SLC6A2 subfamily. Monomer. Can form homodimers in the cell membrane; homodimerization is mostly mediated by cholesterol and lipids, and regulates neurotransmitter transport activity. Interacts with PRKCABP. Post-translationally, palmitoylated; palmitoylation regulates protein levels and neurotransmitter transport.

The protein resides in the cell membrane. It is found in the cell projection. The protein localises to the axon. Its subcellular location is the synapse. It localises to the synaptosome. The enzyme catalyses (R)-noradrenaline(out) + chloride(out) + Na(+)(out) = (R)-noradrenaline(in) + chloride(in) + Na(+)(in). It carries out the reaction dopamine(out) + chloride(out) + Na(+)(out) = dopamine(in) + chloride(in) + Na(+)(in). The catalysed reaction is dopamine(out) + chloride(out) + 2 Na(+)(out) = dopamine(in) + chloride(in) + 2 Na(+)(in). Inhibited by mazindol, desipramine, nomifensine and nortriptyline. Functionally, mediates sodium- and chloride-dependent transport of norepinephrine (also known as noradrenaline), the primary signaling neurotransmitter in the autonomic sympathetic nervous system. Is responsible for norepinephrine re-uptake and clearance from the synaptic cleft, thus playing a crucial role in norepinephrine inactivation and homeostasis. Can also mediate sodium- and chloride-dependent transport of dopamine. The sequence is that of Sodium-dependent noradrenaline transporter from Homo sapiens (Human).